The chain runs to 1166 residues: IQ domain-containing protein N (1166 aa).

Residues 1-19 (MQPATQLQFTNHLSPNGQC) are compositionally biased toward polar residues. The segment at 1–56 (MQPATQLQFTNHLSPNGQCILQPPPTPSLPDKMEKAPPQPQHEGLKSEEHLPQQPA) is disordered. The region spanning 89–118 (HARAATLIQANWRGYRLRQKLISQMTAAKA) is the IQ 1 domain. Disordered regions lie at residues 431–450 (VCPGPAMAKTPPQTHPVATP), 769–797 (LSAPPWAKPEDRWTQPKPHGHVPGKTTQG), and 829–848 (DSGATRAQPSMPSQVVPCQE). 5 consecutive IQ domains span residues 907–932 (AVTTIQAGVRGYLVRRRIRVWHRRAT), 928–955 (HRRATVIQATWRGYRMRRNLAHLCRATT), 952–979 (RATTIIQAAWRGYSTRRDQARHRQMLHP), 1091–1119 (RDKAATAIQSAWRGFKIRQQMRQQQMAAK), and 1114–1143 (QQMAAKMVQATWRGHHTRSCLKSTEALLGP). The tract at residues 1145 to 1166 (DPWSSSQHMHWASSQHTHWPGI) is disordered. Polar residues predominate over residues 1147–1166 (WSSSQHMHWASSQHTHWPGI).

As to quaternary structure, interacts with calmodulin.

Functionally, essential for spermiogenesis and fertilization. May be required for manchette assembly in elongating spermatids. The chain is IQ domain-containing protein N (IQCN) from Macaca fascicularis (Crab-eating macaque).